Here is a 123-residue protein sequence, read N- to C-terminus: Methanesulfonate monooxygenase ferredoxin subunit (123 aa).

Residues 4-99 (TYLCDAADVA…LKEEDGKLLA (96 aa)) form the Rieske domain. [2Fe-2S] cluster contacts are provided by Cys43, His45, Cys63, and His66.

Belongs to the bacterial ring-hydroxylating dioxygenase ferredoxin component family. The MSA monooxygenase system consists of 4 proteins: the 2 subunits of the hydroxylase component (MsmA and MsmB), a ferredoxin (MsmC) and a ferredoxin reductase (MsmD). The ferredoxin component is dimeric. The cofactor is [2Fe-2S] cluster.

The protein resides in the cytoplasm. The enzyme catalyses methanesulfonate + NADH + O2 = sulfite + formaldehyde + NAD(+) + H2O. MSAMO is inhibited by metal chelators (such as bathophenanthroline, bathocuprione, neocuprione, alpha-alpha-dipyridil and sodium EDTA) and by sodium azide, sodium arsenate and potassium cyanide. Functionally, methanesulfonate monooxygenase (MSAMO) mediates the primary degradation of methanesulfonic acid (MSA) to produce formaldehyd and inorganic sulfite by initial hydroxylation of the carbon atom prior to spontaneous cleavage of the unstable hydroxymethanesulfonic acid. MSAMO has a restricted substrate range that includes only the short-chain aliphatic sulfonates (methane- to butanesulfonate) and excludes all larger molecules, such as arylsulfonates and aromatic sulfonates. All MSAMO components are required for enzyme activity. This is Methanesulfonate monooxygenase ferredoxin subunit from Methylosulfonomonas methylovora.